A 501-amino-acid chain; its full sequence is 25-hydroxyvitamin D-1 alpha hydroxylase, mitochondrial (501 aa).

A heme-binding site is contributed by cysteine 448.

This sequence belongs to the cytochrome P450 family. Heme serves as cofactor. Kidney.

The protein localises to the mitochondrion membrane. It catalyses the reaction calcidiol + 2 reduced [adrenodoxin] + O2 + 2 H(+) = calcitriol + 2 oxidized [adrenodoxin] + H2O. The catalysed reaction is secalciferol + 2 reduced [adrenodoxin] + O2 + 2 H(+) = calcitetrol + 2 oxidized [adrenodoxin] + H2O. It functions in the pathway hormone biosynthesis; cholecalciferol biosynthesis. Catalyzes the conversion of 25-hydroxyvitamin D3 (25(OH)D3) to 1-alpha,25-dihydroxyvitamin D3 (1alpha,25(OH)(2)D3), and of 24,25-dihydroxyvitamin D3 (24,25(OH)(2)D3) to 1-alpha,24,25-trihydroxyvitamin D3 (1alpha,24,25(OH)(3)D3). Is also active with 25-hydroxy-24-oxo-vitamin D3. Plays an important role in normal bone growth, calcium metabolism, and tissue differentiation. In Rattus norvegicus (Rat), this protein is 25-hydroxyvitamin D-1 alpha hydroxylase, mitochondrial (Cyp27b1).